The sequence spans 702 residues: Phosphatase and actin regulator 4 (702 aa).

Disordered stretches follow at residues 1 to 37 (MEDP…KSKF), 72 to 194 (RKPR…SSGG), and 222 to 363 (NLSV…PFPA). An RPEL 1 repeat occupies 63-88 (EVLERKISMRKPREELVKRGVLLEDP). Residues 72–84 (RKPREELVKRGVL) show a composition bias toward basic and acidic residues. A compositionally biased stretch (polar residues) spans 106 to 120 (GHTTPIGNARSSSPV). Phosphoserine occurs at positions 116, 118, 131, and 147. Polar residues predominate over residues 147-156 (STGSQPNSEA). Residues 163–173 (VPKPPLLPPKR) are compositionally biased toward pro residues. A compositionally biased stretch (low complexity) spans 233–250 (TLPAAPASTNTTATPSLT). Phosphoserine occurs at positions 270 and 291. Over residues 301–318 (PSTSVPTLESAAAITTKT) the composition is skewed to polar residues. Ser342 and Ser344 each carry phosphoserine. Over residues 342–362 (SPSPPLPTHIPPEPPRTPPFP) the composition is skewed to pro residues. Phosphothreonine is present on Thr358. Ser427 carries the phosphoserine modification. Thr432 bears the Phosphothreonine mark. Phosphoserine occurs at positions 443, 453, and 464. The tract at residues 469-536 (IEMLKVPDDE…EEDEDESYQS (68 aa)) is disordered. A compositionally biased stretch (polar residues) spans 484-497 (TCPSTFSEEMTPTS). The segment covering 508–518 (EEEEKESDSDS) has biased composition (acidic residues). Ser514, Ser516, Ser557, and Ser590 each carry phosphoserine. RPEL repeat units follow at residues 583–608 (NTLI…QPKN) and 621–646 (RRLT…RFNE). Residues 592–615 (RPTPEELEQRNILQPKNEADRQAE) form a disordered region. Residue Ser628 is modified to Phosphoserine.

This sequence belongs to the phosphatase and actin regulator family. In terms of assembly, binds PPP1CA and actin.

It is found in the cytoplasm. The protein resides in the cell projection. The protein localises to the lamellipodium. Functionally, regulator of protein phosphatase 1 (PP1) required for neural tube and optic fissure closure, and enteric neural crest cell (ENCCs) migration during development. Acts as an activator of PP1 by interacting with PPP1CA and preventing phosphorylation of PPP1CA at 'Thr-320'. During neural tube closure, localizes to the ventral neural tube and activates PP1, leading to down-regulate cell proliferation within cranial neural tissue and the neural retina. Also acts as a regulator of migration of enteric neural crest cells (ENCCs) by activating PP1, leading to dephosphorylation and subsequent activation of cofilin (COF1 or COF2) and repression of the integrin signaling through the RHO/ROCK pathway. The protein is Phosphatase and actin regulator 4 (PHACTR4) of Homo sapiens (Human).